We begin with the raw amino-acid sequence, 4960 residues long: Malformin synthetase mlfA (4960 aa).

The tract at residues 194–564 (ERHATNRPHS…CGRADTQVKL (371 aa)) is adenylation 1. Residues 705 to 778 (SRLEQEVQLA…EAASLAEVQE (74 aa)) form the Carrier 1 domain. An O-(pantetheine 4'-phosphoryl)serine modification is found at Ser739. The segment at 816-1247 (EDVFPCTTMQ…ALNTLSLLQA (432 aa)) is condensation 1. Residues 1275–1650 (DRWVTRQPEG…GRKDTQVKLR (376 aa)) form an adenylation 2 region. Positions 1777–1854 (TPASELERTL…HLAAEVGEPA (78 aa)) constitute a Carrier 2 domain. 2 disordered regions span residues 1855-1883 (GQSA…NDGV) and 1917-1943 (GGSS…KKNA). Low complexity-rich tracts occupy residues 1857 to 1881 (SASS…STND) and 1919 to 1936 (SSSN…SSSS). The condensation 2 stretch occupies residues 1989–2404 (EDIYPATALQ…AVSCSDKETL (416 aa)). The segment at 2427–2819 (RRTPHAPAVC…IGRRDGQLKL (393 aa)) is adenylation 3. Residues 2955 to 3031 (RPVTSQEREM…QLICHINTIR (77 aa)) enclose the Carrier 3 domain. Ser2992 is modified (O-(pantetheine 4'-phosphoryl)serine). Condensation stretches follow at residues 3049-3464 (VALA…FTFP) and 3520-3889 (SGYV…EQLV). The tract at residues 3914 to 4304 (HNSRQAVCAW…VGRKDNQIKF (391 aa)) is adenylation 4. The 77-residue stretch at 4438–4514 (MPSTAAERKM…DLSDQAKSLI (77 aa)) folds into the Carrier 4 domain. Residue Ser4475 is modified to O-(pantetheine 4'-phosphoryl)serine. A condensation 5 region spans residues 4551 to 4878 (DVLPTTSFQH…LQTIVQHQNN (328 aa)).

It belongs to the NRP synthetase family.

Its pathway is secondary metabolite biosynthesis. In terms of biological role, nonribosomal peptide synthetase; part of the gene cluster that mediates the biosynthesis of malformins, cyclic pentapeptides with a disulfide bond between 2 consecutive cysteins, that show potential anti-tumor as well as antimalarial and antitrypanosomal properties. The nonribosomal peptide synthetase mlfA is responsible of the formation of the cyclic pentapeptide. The malformin biosynthesis clusters in malformin-producing fungi also contain enzymes involved in the formation of the disulfide bond between the two consecutive cysteins within malformins, in addition to additional tailoring enzymes such as methyltransferases or oxidoreductases. They are also composed of up to 4 major facilitator superfamily transporters, and transcription factors probably involved in the regulation of the expression of those clusters. The protein is Malformin synthetase mlfA of Aspergillus neoniger (strain CBS 115656).